The following is a 496-amino-acid chain: E3 ubiquitin-protein ligase CBL-C (496 aa).

The interval 7 to 144 is 4H; sequence PRGWQRGEPR…SALFPAGKYC (138 aa). Positions 7–320 constitute a Cbl-PTB domain; it reads PRGWQRGEPR…GKKHNPDLTE (314 aa). The interval 145 to 217 is EF-hand-like; it reads GHLYQLTKGS…FEFDVFTRLF (73 aa). Residues Asp198, Thr200, Asn202, and Glu209 each coordinate Ca(2+). Positions 218 to 320 are SH2-like; sequence QPWPTLLRNW…GKKHNPDLTE (103 aa). Residue Arg263 coordinates 4-O-phospho-L-tyrosine. Positions 321 to 349 are linker; sequence LCRVEPYQRIQVSEEQLLLYQAMNSTFQL. At Tyr340 the chain carries Phosphotyrosine; by SRC. The segment at 350 to 389 adopts an RING-type zinc-finger fold; the sequence is CKICAERDKDVRIEPCGHLLCSCCLAAWQDSDSQTCPFCR. Residues 350 to 494 form an interaction with RET region; that stretch reads CKICAERDKD…RPRAREEATE (145 aa). The tract at residues 432-453 is disordered; the sequence is PVIPSAPSLLPEDQFPQGPQDK.

In terms of assembly, interacts with Ubiquitin-conjugating enzyme E2 UBE2D2 and UBE2D3. Isoform 1 interacts with EGFR (tyrosine phosphorylated). Interacts with the SH3 domain proteins LYN and CRK. Interacts (via RING-type zinc finger) with TGFB1I1 (via LIM zinc-binding domain 2); the interaction is direct and enhances the E3 activity. Interacts directly with RET (inactive) and CD2AP; dissociates from RET upon RET activation by GDNF which also increases the interaction with CD2AP suggesting dissociation as CBLC:CD2AP complex. Interacts with SRC; the interaction is enhanced when SRC is phosphorylated at 'Tyr-419'. Phosphorylated on tyrosines by EGFR. In terms of processing, phosphorylated on multiple tyrosine residues by SRC. Isoform 1, but not isoform 2, is phosphorylated on tyrosines by EGFR. Post-translationally, autoubiquitinated, when phosphorylated at Tyr-340. Widely expressed in tissues, where the expression is restricted to epithelial cells (at protein level).

It carries out the reaction S-ubiquitinyl-[E2 ubiquitin-conjugating enzyme]-L-cysteine + [acceptor protein]-L-lysine = [E2 ubiquitin-conjugating enzyme]-L-cysteine + N(6)-ubiquitinyl-[acceptor protein]-L-lysine.. With respect to regulation, phosphorylation at Tyr-340 is necessary and sufficient for the activation of E3 activity. Acts as an E3 ubiquitin-protein ligase, which accepts ubiquitin from specific E2 ubiquitin-conjugating enzymes, and then transfers it to substrates promoting their degradation by the proteasome. Functionally coupled with the E2 ubiquitin-protein ligases UB2D1, UB2D2 and UB2D3. Regulator of EGFR mediated signal transduction; upon EGF activation, ubiquitinates EGFR. Isoform 1, but not isoform 2, inhibits EGF stimulated MAPK1 activation. Promotes ubiquitination of SRC phosphorylated at 'Tyr-424', has the highest ubiquitin ligase activity among CBL family proteins. In collaboration with CD2AP may act as regulatory checkpoint for Ret signaling by modulating the rate of RET degradation after ligand activation; CD2AP converts it from an inhibitor to a promoter of RET degradation; the function limits the potency of GDNF on neuronal survival. This chain is E3 ubiquitin-protein ligase CBL-C (Cblc), found in Mus musculus (Mouse).